Reading from the N-terminus, the 975-residue chain is Glycine dehydrogenase (decarboxylating) (975 aa).

Lys-723 is subject to N6-(pyridoxal phosphate)lysine.

This sequence belongs to the GcvP family. The glycine cleavage system is composed of four proteins: P, T, L and H. Requires pyridoxal 5'-phosphate as cofactor.

It carries out the reaction N(6)-[(R)-lipoyl]-L-lysyl-[glycine-cleavage complex H protein] + glycine + H(+) = N(6)-[(R)-S(8)-aminomethyldihydrolipoyl]-L-lysyl-[glycine-cleavage complex H protein] + CO2. Functionally, the glycine cleavage system catalyzes the degradation of glycine. The P protein binds the alpha-amino group of glycine through its pyridoxal phosphate cofactor; CO(2) is released and the remaining methylamine moiety is then transferred to the lipoamide cofactor of the H protein. This Burkholderia mallei (strain NCTC 10247) protein is Glycine dehydrogenase (decarboxylating).